Consider the following 349-residue polypeptide: Dihydroorotate dehydrogenase (quinone) (349 aa).

FMN contacts are provided by residues Pro-59–Lys-63 and Thr-83. Position 63 (Lys-63) interacts with substrate. Asn-108–Phe-112 contacts substrate. Residues Asn-142 and Asn-173 each contribute to the FMN site. Asn-173 contacts substrate. The active-site Nucleophile is the Ser-176. Substrate is bound at residue Asn-178. Lys-212 and Ser-240 together coordinate FMN. Asn-241 to Thr-242 serves as a coordination point for substrate. Residues Gly-262, Gly-291, and Tyr-312–Ser-313 each bind FMN.

It belongs to the dihydroorotate dehydrogenase family. Type 2 subfamily. Monomer. It depends on FMN as a cofactor.

It is found in the cell membrane. The catalysed reaction is (S)-dihydroorotate + a quinone = orotate + a quinol. It participates in pyrimidine metabolism; UMP biosynthesis via de novo pathway; orotate from (S)-dihydroorotate (quinone route): step 1/1. Its function is as follows. Catalyzes the conversion of dihydroorotate to orotate with quinone as electron acceptor. This chain is Dihydroorotate dehydrogenase (quinone), found in Novosphingobium aromaticivorans (strain ATCC 700278 / DSM 12444 / CCUG 56034 / CIP 105152 / NBRC 16084 / F199).